The sequence spans 122 residues: Large ribosomal subunit protein bL12 (122 aa).

Belongs to the bacterial ribosomal protein bL12 family. As to quaternary structure, homodimer. Part of the ribosomal stalk of the 50S ribosomal subunit. Forms a multimeric L10(L12)X complex, where L10 forms an elongated spine to which 2 to 4 L12 dimers bind in a sequential fashion. Binds GTP-bound translation factors.

Forms part of the ribosomal stalk which helps the ribosome interact with GTP-bound translation factors. Is thus essential for accurate translation. This Deinococcus radiodurans (strain ATCC 13939 / DSM 20539 / JCM 16871 / CCUG 27074 / LMG 4051 / NBRC 15346 / NCIMB 9279 / VKM B-1422 / R1) protein is Large ribosomal subunit protein bL12.